A 209-amino-acid chain; its full sequence is Protocatechuate 3,4-dioxygenase alpha chain (209 aa).

Arginine 142 provides a ligand contact to 3,4-dihydroxybenzoate.

This sequence belongs to the intradiol ring-cleavage dioxygenase family. As to quaternary structure, the enzyme is an oligomer of 12 copies of the alpha and beta chains. The cofactor is Fe(3+).

It carries out the reaction 3,4-dihydroxybenzoate + O2 = 3-carboxy-cis,cis-muconate + 2 H(+). The protein operates within aromatic compound metabolism; beta-ketoadipate pathway; 3-carboxy-cis,cis-muconate from 3,4-dihydroxybenzoate: step 1/1. Plays an essential role in the utilization of numerous aromatic and hydroaromatic compounds via the beta-ketoadipate pathway. The protein is Protocatechuate 3,4-dioxygenase alpha chain (pcaG) of Acinetobacter baylyi (strain ATCC 33305 / BD413 / ADP1).